Consider the following 289-residue polypeptide: uncharacterized protein (289 aa).

This is an uncharacterized protein from Dictyostelium discoideum (Social amoeba).